Consider the following 1238-residue polypeptide: Virulence sensor protein BvgS (1238 aa).

The N-terminal stretch at 1 to 32 (MPAPHRLYPRSLICLAQALLVWALLAWAPAQA) is a signal peptide. Residues 33–307 (SQELTLVGKA…REQQWMANHP (275 aa)) are Cytoplasmic-facing. A helical transmembrane segment spans residues 308-331 (VVKVAVLNLFAPFTLFRTDEQFGG). At 332–541 (ISAAVLQLLQ…PRTWYAYRNE (210 aa)) the chain is on the periplasmic side. The chain crosses the membrane as a helical span at residues 542 to 563 (IYLLIGLGLLSALLFLSWIVYL). Residues 564-1238 (RRQIRQRKRA…LEQRPHQGQP (675 aa)) lie on the Cytoplasmic side of the membrane. Residues 580–651 (QLEFMRVLID…MHEFLLTRMA (72 aa)) form the PAS domain. In terms of domain architecture, PAC spans 652-708 (AEREPRFEDRDVTLHGRTRHVYQWTVPYGDSLGELKGIIGGWIDITERAELLRELHD). In terms of domain architecture, Histidine kinase spans 726–948 (TMSHEIRTPM…TVSVDLRLTM (223 aa)). A Phosphohistidine; by autocatalysis modification is found at His-729. A Response regulatory domain is found at 974 to 1095 (RVLVVDDHKP…ALRQRLNEAA (122 aa)). Asp-1023 carries the 4-aspartylphosphate modification. The HPt domain occupies 1133-1228 (DEALIRQLLE…AALETQLRAW (96 aa)). Residue His-1172 is modified to Phosphohistidine.

Post-translationally, activation requires a sequential transfer of a phosphate group from a His in the primary transmitter domain, to an Asp in the receiver domain and to a His in the secondary transmitter domain.

It localises to the cell inner membrane. The catalysed reaction is ATP + protein L-histidine = ADP + protein N-phospho-L-histidine.. Its function is as follows. Member of the two-component regulatory system BvgS/BvgA. Phosphorylates BvgA via a four-step phosphorelay in response to environmental signals. This chain is Virulence sensor protein BvgS (bvgS), found in Bordetella parapertussis (strain 12822 / ATCC BAA-587 / NCTC 13253).